The following is a 263-amino-acid chain: Genetic interactor of prohibitin 7, mitochondrial (263 aa).

A mitochondrion-targeting transit peptide spans 1 to 26; the sequence is MSLAMLTRNMLRRTSVRAFASSASNF. The chain crosses the membrane as a helical span at residues 188-204; the sequence is VTKTFIYITLFVMLFAI. A disordered region spans residues 232-252; the sequence is KEQKEKEKEIEEENRKNQEKQ.

The protein belongs to the GEP7 family.

The protein localises to the mitochondrion membrane. Functionally, involved in respiratory growth and required for cell survival in the absence of prohibitins. This is Genetic interactor of prohibitin 7, mitochondrial (GEP7) from Clavispora lusitaniae (strain ATCC 42720) (Yeast).